The following is a 132-amino-acid chain: Ribosome-binding factor A (132 aa).

Belongs to the RbfA family. Monomer. Binds 30S ribosomal subunits, but not 50S ribosomal subunits or 70S ribosomes.

Its subcellular location is the cytoplasm. One of several proteins that assist in the late maturation steps of the functional core of the 30S ribosomal subunit. Associates with free 30S ribosomal subunits (but not with 30S subunits that are part of 70S ribosomes or polysomes). Required for efficient processing of 16S rRNA. May interact with the 5'-terminal helix region of 16S rRNA. This Prochlorococcus marinus subsp. pastoris (strain CCMP1986 / NIES-2087 / MED4) protein is Ribosome-binding factor A.